Reading from the N-terminus, the 252-residue chain is 2-succinyl-6-hydroxy-2,4-cyclohexadiene-1-carboxylate synthase (252 aa).

The protein belongs to the AB hydrolase superfamily. MenH family. As to quaternary structure, monomer.

It catalyses the reaction 5-enolpyruvoyl-6-hydroxy-2-succinyl-cyclohex-3-ene-1-carboxylate = (1R,6R)-6-hydroxy-2-succinyl-cyclohexa-2,4-diene-1-carboxylate + pyruvate. It functions in the pathway quinol/quinone metabolism; 1,4-dihydroxy-2-naphthoate biosynthesis; 1,4-dihydroxy-2-naphthoate from chorismate: step 3/7. The protein operates within quinol/quinone metabolism; menaquinone biosynthesis. Functionally, catalyzes a proton abstraction reaction that results in 2,5-elimination of pyruvate from 2-succinyl-5-enolpyruvyl-6-hydroxy-3-cyclohexene-1-carboxylate (SEPHCHC) and the formation of 2-succinyl-6-hydroxy-2,4-cyclohexadiene-1-carboxylate (SHCHC). This chain is 2-succinyl-6-hydroxy-2,4-cyclohexadiene-1-carboxylate synthase, found in Citrobacter koseri (strain ATCC BAA-895 / CDC 4225-83 / SGSC4696).